The primary structure comprises 127 residues: Protein translocase subunit SecE (127 aa).

Transmembrane regions (helical) follow at residues A16–Y36, L41–L61, and I96–V116.

It belongs to the SecE/SEC61-gamma family. Component of the Sec protein translocase complex. Heterotrimer consisting of SecY, SecE and SecG subunits. The heterotrimers can form oligomers, although 1 heterotrimer is thought to be able to translocate proteins. Interacts with the ribosome. Interacts with SecDF, and other proteins may be involved. Interacts with SecA.

It localises to the cell inner membrane. Functionally, essential subunit of the Sec protein translocation channel SecYEG. Clamps together the 2 halves of SecY. May contact the channel plug during translocation. The polypeptide is Protein translocase subunit SecE (Salmonella typhi).